The sequence spans 344 residues: Uroporphyrinogen decarboxylase (344 aa).

Substrate contacts are provided by residues 26-30, Phe-45, Asp-75, Tyr-151, Ser-206, and His-320; that span reads RQAGR.

It belongs to the uroporphyrinogen decarboxylase family. As to quaternary structure, homodimer.

It is found in the cytoplasm. It catalyses the reaction uroporphyrinogen III + 4 H(+) = coproporphyrinogen III + 4 CO2. It functions in the pathway porphyrin-containing compound metabolism; protoporphyrin-IX biosynthesis; coproporphyrinogen-III from 5-aminolevulinate: step 4/4. Catalyzes the decarboxylation of four acetate groups of uroporphyrinogen-III to yield coproporphyrinogen-III. The chain is Uroporphyrinogen decarboxylase from Staphylococcus haemolyticus (strain JCSC1435).